A 388-amino-acid polypeptide reads, in one-letter code: Protein YnjB (388 aa).

Positions 333–357 (AVWGDPSVLDPQKLPDGQRESLQSR) are disordered.

This chain is Protein YnjB (ynjB), found in Escherichia coli (strain K12).